A 175-amino-acid polypeptide reads, in one-letter code: Calcineurin subunit B (175 aa).

EF-hand domains lie at 21–56 (DEIE…SANP), 60–88 (RIME…FSGR), 90–125 (SKDE…MVGS), and 131–166 (QLQQ…TEVA). Ca(2+) is bound by residues aspartate 34, aspartate 36, serine 38, serine 40, glutamate 45, aspartate 66, aspartate 68, serine 70, aspartate 72, glutamate 77, aspartate 103, aspartate 105, aspartate 107, glutamate 114, aspartate 144, aspartate 146, aspartate 148, glutamine 150, and glutamate 155.

It belongs to the calcineurin regulatory subunit family. In terms of assembly, composed of a catalytic subunit (A) and a regulatory subunit (B).

In terms of biological role, regulatory subunit of calcineurin, a calcium-dependent, calmodulin stimulated protein phosphatase. Confers calcium sensitivity. In Candida glabrata (strain ATCC 2001 / BCRC 20586 / JCM 3761 / NBRC 0622 / NRRL Y-65 / CBS 138) (Yeast), this protein is Calcineurin subunit B (CNB1).